Consider the following 423-residue polypeptide: MAKNIQAIRGMNDCSPTESPLWQWIENKVRNVLAGYGYSEVRMPIVESTPLFARAIGEVTDVVSKEMYTFWDNDEQLTLRPEGTAGCVRAAIERGWIYNNEQRLWYMGPMFRHERPQKGRYRQFHQAGVEVFGIPNPEIDAELIILTARLWKELGIDQHVSLQLNSIGSLEARANYRSALVKFLENHTALMSDEEKERLVKNPLRILDTKNQALQEVLNDAPKLLDYLDDDSREHFAHLCHLLDAMGIAYEVNPKLVRGLDYYNKTVFEWVTSALGSQGTVCGGGRYDGLVEQLGGHATQGVGFAMGLERLVLLVQEVNKEINLPKAVDVYVVYSGEGATLNAFQMAERIRSELPQLGVMTHCSGGNFKKQFKRADKVEAQIALVIGESEVEQQTVVLKDLQSGAEQVIIAQADLIAELTKRF.

The protein belongs to the class-II aminoacyl-tRNA synthetase family. As to quaternary structure, homodimer.

The protein localises to the cytoplasm. It carries out the reaction tRNA(His) + L-histidine + ATP = L-histidyl-tRNA(His) + AMP + diphosphate + H(+). The polypeptide is Histidine--tRNA ligase (Actinobacillus pleuropneumoniae serotype 7 (strain AP76)).